A 161-amino-acid polypeptide reads, in one-letter code: Nucleotide-binding protein XCV3791 (161 aa).

Belongs to the YajQ family.

In terms of biological role, nucleotide-binding protein. The protein is Nucleotide-binding protein XCV3791 of Xanthomonas euvesicatoria pv. vesicatoria (strain 85-10) (Xanthomonas campestris pv. vesicatoria).